Here is a 261-residue protein sequence, read N- to C-terminus: Uridine-cytidine kinase 2-B (261 aa).

29-37 (GGTASGKSS) is a binding site for ATP. Positions 86, 114, 119, 168, 178, and 186 each coordinate substrate. Asp215 serves as a coordination point for ATP. Positions 238–261 (RQNGFQNGHGTPRQRRTSESSRPH) are disordered.

The protein belongs to the uridine kinase family. As to quaternary structure, homotetramer.

The enzyme catalyses uridine + ATP = UMP + ADP + H(+). The catalysed reaction is cytidine + ATP = CMP + ADP + H(+). It functions in the pathway pyrimidine metabolism; CTP biosynthesis via salvage pathway; CTP from cytidine: step 1/3. It participates in pyrimidine metabolism; UMP biosynthesis via salvage pathway; UMP from uridine: step 1/1. Its function is as follows. Phosphorylates uridine and cytidine to uridine monophosphate and cytidine monophosphate. Does not phosphorylate deoxyribonucleosides or purine ribonucleosides. Can use ATP or GTP as a phosphate donor. The protein is Uridine-cytidine kinase 2-B (uck2b) of Danio rerio (Zebrafish).